The following is a 1760-amino-acid chain: Chitin synthase A (1760 aa).

A glycan (N-linked (GlcNAc...) asparagine) is linked at Asn157. The next 2 membrane-spanning stretches (helical) occupy residues 729-749 (IWTGFVWALTFWIPSFVLRFV) and 765-785 (LVLVFLILLFNAIVCFYIIAF). Residues Asn876 and Asn996 are each glycosylated (N-linked (GlcNAc...) asparagine). Residues 1027–1047 (ILLAFTCLICAVILVKFLAAL) form a helical membrane-spanning segment. Asn1392 carries N-linked (GlcNAc...) asparagine glycosylation. 3 helical membrane-spanning segments follow: residues 1417-1437 (FVVLVDLLGTIILPATCVYLG), 1449-1469 (IPIISIAILAGVYGLQAIIFI), and 1477-1497 (IGWMIIYICAYPIYSFVLPMY). Residues Asn1557, Asn1645, and Asn1650 are each glycosylated (N-linked (GlcNAc...) asparagine). Residues 1670–1691 (DNLLGVPRPNSRSPVGGYTSRP) are disordered. Positions 1702-1758 (GPDEMAITDAIRSCLAEVDLDTVTKKQVRALVEQRLQATLTGDKRAFLDRQIDQELA) constitute a DEK-C domain.

Belongs to the chitin synthase family. Class V subfamily.

It localises to the cell membrane. The enzyme catalyses [(1-&gt;4)-N-acetyl-beta-D-glucosaminyl](n) + UDP-N-acetyl-alpha-D-glucosamine = [(1-&gt;4)-N-acetyl-beta-D-glucosaminyl](n+1) + UDP + H(+). Its function is as follows. Polymerizes chitin, a structural polymer of the cell wall and septum, by transferring the sugar moiety of UDP-GlcNAc to the non-reducing end of the growing chitin polymer. Plays an important role in cell-wall formation during both hyphal growth and conidiation. This Aspergillus oryzae (strain ATCC 42149 / RIB 40) (Yellow koji mold) protein is Chitin synthase A.